Consider the following 438-residue polypeptide: MEVPEIEKQIGINLYSTDTTGLGGQLRQEIEDFIVKEITNREEGEEGKYLIVELTKRDWDTHHLTRTLSRILQVSQKRISVAGTKDKRALTTQKISIFDTDASEIEKIHLKDIELKVLGRSRKSVELGDLWGNDFRITVRNIENSPEETEALLKKTTDEILAQGGVPNFFGIQRFGSVRPVTHLVGKAIVEGNFEKAALLYIAEPFPEEPEETKNARQFVKDTLDFKEGLKTYPLRLGHERAMMNHLIANPEDYSGSFRVLPQNLYRMFVHGYQSYIYNIILCRRIEAGIPLNRAVEGDIVCFRNEVGLPDSSKTEKVTSETVNAMNRLLKLGRAFITAPLPGYNTEFASGIPGEIENGVLKELGVSLEGFNIEKFPEMSSKGTRREVLLEVKPKFEAGEDELNPGKSKAVLEFMLPKGSYATTVLREYMKVNPLQMS.

Asp86 functions as the Nucleophile in the catalytic mechanism. Residues 165–390 enclose the TRUD domain; sequence GVPNFFGIQR…SKGTRREVLL (226 aa).

It belongs to the pseudouridine synthase TruD family.

It catalyses the reaction uridine(13) in tRNA = pseudouridine(13) in tRNA. Its function is as follows. Could be responsible for synthesis of pseudouridine from uracil-13 in transfer RNAs. The protein is Probable tRNA pseudouridine synthase D of Methanosarcina mazei (strain ATCC BAA-159 / DSM 3647 / Goe1 / Go1 / JCM 11833 / OCM 88) (Methanosarcina frisia).